Here is a 274-residue protein sequence, read N- to C-terminus: Large ribosomal subunit protein uL2 (274 aa).

The tract at residues R221–K274 is disordered.

This sequence belongs to the universal ribosomal protein uL2 family. In terms of assembly, part of the 50S ribosomal subunit. Forms a bridge to the 30S subunit in the 70S ribosome.

In terms of biological role, one of the primary rRNA binding proteins. Required for association of the 30S and 50S subunits to form the 70S ribosome, for tRNA binding and peptide bond formation. It has been suggested to have peptidyltransferase activity; this is somewhat controversial. Makes several contacts with the 16S rRNA in the 70S ribosome. The protein is Large ribosomal subunit protein uL2 of Yersinia enterocolitica.